Here is a 252-residue protein sequence, read N- to C-terminus: MENERAKQVYLAKLNEQAERYDEMVEAMKKVAALDVELTIEERNLLSVGYKNVIGARRASWRILSSIEQKEESKGNEQNAKRIKDYRTKVEEELSKICYDILAVIDKHLVPFATSGESTVFYYKMKGDYFRYLAEFKSGADREEAADLSLKAYEAATSSASTELSTTHPIRLGLALNFSVFYYEILNSPERACHLAKRAFDEAIAELDSLNEDSYKDSTLIMQLLRDNLTLWTSDLEEGGEQSKGHNQQDEN.

S65 and S188 each carry phosphoserine.

The protein belongs to the 14-3-3 family.

Its subcellular location is the nucleus. It is found in the cytoplasm. Is associated with a DNA binding complex that binds to the G box, a well-characterized cis-acting DNA regulatory element found in plant genes. The sequence is that of 14-3-3-like protein GF14 omicron (GRF11) from Arabidopsis thaliana (Mouse-ear cress).